A 584-amino-acid polypeptide reads, in one-letter code: Myo-inositol transporter 1 (584 aa).

The Cytoplasmic portion of the chain corresponds to 1–81 (MGIHIPYLTS…TSVMITFNQS (81 aa)). Position 12 is a phosphothreonine (Thr-12). A disordered region spans residues 13–42 (SQSNVGDAVGNADSVEFNSEHDSPSKRGKI). Ser-26, Ser-31, Ser-35, Ser-37, and Ser-46 each carry phosphoserine. The span at 30 to 42 (NSEHDSPSKRGKI) shows a compositional bias: basic and acidic residues. The chain crosses the membrane as a helical span at residues 82–102 (LSPFIITLTFVASISGFMFGY). Over 103 to 129 (DTGYISSALISIGTDLDHKVLTYGEKE) the chain is Extracellular. Residues 130-150 (IVTAATSLGALITSIFAGTAA) traverse the membrane as a helical segment. Topologically, residues 151 to 163 (DIFGRKRCLMGSN) are cytoplasmic. The chain crosses the membrane as a helical span at residues 164-184 (LMFVIGAILQVSAHTFWQMAV). Over 185–186 (GR) the chain is Extracellular. A helical transmembrane segment spans residues 187–207 (LIMGFGVGIGSLIAPLFISEI). The Cytoplasmic portion of the chain corresponds to 208–215 (APKMIRGR). The chain crosses the membrane as a helical span at residues 216–236 (LTVINSLWLTGGQLVAYGCGA). Residues 237-246 (GLNYVNNGWR) are Extracellular-facing. Residues 247–267 (ILVGLSLIPTAVQFTCLCFLP) traverse the membrane as a helical segment. The Cytoplasmic portion of the chain corresponds to 268 to 349 (DTPRYYVMKG…IGCGLQAIQQ (82 aa)). Residues 350-370 (FTGWNSLMYFSGTIFETVGFK) traverse the membrane as a helical segment. Residue Asn-371 is glycosylated (N-linked (GlcNAc...) asparagine). At 371-376 (NSSAVS) the chain is on the extracellular side. The chain crosses the membrane as a helical span at residues 377 to 397 (IIVSGTNFIFTLVAFFSIDKI). Topologically, residues 398-400 (GRR) are cytoplasmic. A helical membrane pass occupies residues 401-421 (TILLIGLPGMTMALVVCSIAF). Over 422–441 (HFLGIKFDGAVAVVVSSGFS) the chain is Extracellular. A helical membrane pass occupies residues 442 to 462 (SWGIVIIVFIIVFAAFYALGI). At 463–486 (GTVPWQQSELFPQNVRGIGTSYAT) the chain is on the cytoplasmic side. A helical membrane pass occupies residues 487–507 (ATNWAGSLVIASTFLTMLQNI). Over 508–510 (TPA) the chain is Extracellular. A helical membrane pass occupies residues 511-531 (GTFAFFAGLSCLSTIFCYFCY). The Cytoplasmic portion of the chain corresponds to 532–584 (PELSGLELEEVQTILKDGFNIKASKALAKKRKQQVARVHELKYEPTQEIIEDI). Lys-573 is covalently cross-linked (Glycyl lysine isopeptide (Lys-Gly) (interchain with G-Cter in ubiquitin)).

The protein belongs to the major facilitator superfamily. Sugar transporter (TC 2.A.1.1) family.

The protein resides in the cell membrane. The enzyme catalyses myo-inositol(out) + H(+)(out) = myo-inositol(in) + H(+)(in). Its function is as follows. Major transporter for myo-inositol. The polypeptide is Myo-inositol transporter 1 (ITR1) (Saccharomyces cerevisiae (strain ATCC 204508 / S288c) (Baker's yeast)).